The chain runs to 324 residues: Methionyl-tRNA formyltransferase (324 aa).

112–115 (SILP) contacts (6S)-5,6,7,8-tetrahydrofolate.

The protein belongs to the Fmt family.

It catalyses the reaction L-methionyl-tRNA(fMet) + (6R)-10-formyltetrahydrofolate = N-formyl-L-methionyl-tRNA(fMet) + (6S)-5,6,7,8-tetrahydrofolate + H(+). Attaches a formyl group to the free amino group of methionyl-tRNA(fMet). The formyl group appears to play a dual role in the initiator identity of N-formylmethionyl-tRNA by promoting its recognition by IF2 and preventing the misappropriation of this tRNA by the elongation apparatus. In Shewanella loihica (strain ATCC BAA-1088 / PV-4), this protein is Methionyl-tRNA formyltransferase.